The chain runs to 147 residues: Bis(5'-nucleosyl)-tetraphosphatase [asymmetrical] (147 aa).

A2 carries the N-acetylalanine modification. The region spanning 2–139 (ALRACGLIIF…DMKAVLQEGH (138 aa)) is the Nudix hydrolase domain. The Nudix box motif lies at 43 to 64 (GHVEPGESDLQTALRETQEEAG).

This sequence belongs to the Nudix hydrolase family. It depends on a divalent metal cation as a cofactor.

It carries out the reaction P(1),P(4)-bis(5'-guanosyl) tetraphosphate + H2O = GMP + GTP + 2 H(+). The enzyme catalyses a 5'-end CoA-ribonucleoside in mRNA + H2O = a 5'-end phospho-adenosine-phospho-ribonucleoside in mRNA + (R)-4'-phosphopantetheine + 2 H(+). The catalysed reaction is a 5'-end FAD-phospho-ribonucleoside in mRNA + H2O = a 5'-end phospho-adenosine-phospho-ribonucleoside in mRNA + FMN + 2 H(+). With respect to regulation, inhibited by fluoride ions. In terms of biological role, catalyzes the asymmetric hydrolysis of diadenosine 5',5'''-P1,P4-tetraphosphate (Ap4A) to yield AMP and ATP. Exhibits decapping activity towards FAD-capped RNAs and dpCoA-capped RNAs in vitro. This is Bis(5'-nucleosyl)-tetraphosphatase [asymmetrical] (NUDT2) from Sus scrofa (Pig).